Consider the following 272-residue polypeptide: Secretagogin (272 aa).

6 consecutive EF-hand domains span residues 8-43, 53-89, 101-136, 145-180, 193-228, and 237-272; these read LDAA…MLKK, ERVQ…QEEN, DNSV…LFLQ, KLDE…QENF, ERKR…MMEL, and DLDK…KHKP. The Ca(2+) site is built by D21, D23, N25, Y27, and E32. D114, D116, S118, Y120, E125, D158, N160, D162, R164, D169, D206, S208, T210, E217, D250, N252, D254, K256, and E261 together coordinate Ca(2+).

Its subcellular location is the cytoplasm. The sequence is that of Secretagogin (scgn) from Danio rerio (Zebrafish).